Here is a 477-residue protein sequence, read N- to C-terminus: Aspartyl/glutamyl-tRNA(Asn/Gln) amidotransferase subunit B (477 aa).

The protein belongs to the GatB/GatE family. GatB subfamily. Heterotrimer of A, B and C subunits.

It carries out the reaction L-glutamyl-tRNA(Gln) + L-glutamine + ATP + H2O = L-glutaminyl-tRNA(Gln) + L-glutamate + ADP + phosphate + H(+). It catalyses the reaction L-aspartyl-tRNA(Asn) + L-glutamine + ATP + H2O = L-asparaginyl-tRNA(Asn) + L-glutamate + ADP + phosphate + 2 H(+). Functionally, allows the formation of correctly charged Asn-tRNA(Asn) or Gln-tRNA(Gln) through the transamidation of misacylated Asp-tRNA(Asn) or Glu-tRNA(Gln) in organisms which lack either or both of asparaginyl-tRNA or glutaminyl-tRNA synthetases. The reaction takes place in the presence of glutamine and ATP through an activated phospho-Asp-tRNA(Asn) or phospho-Glu-tRNA(Gln). This Streptococcus gordonii (strain Challis / ATCC 35105 / BCRC 15272 / CH1 / DL1 / V288) protein is Aspartyl/glutamyl-tRNA(Asn/Gln) amidotransferase subunit B.